A 363-amino-acid chain; its full sequence is Chorismate synthase (363 aa).

Residue Arg47 participates in NADP(+) binding. FMN contacts are provided by residues 124–126 (RSS), Gly285, 300–304 (KPTAT), and Arg326.

It belongs to the chorismate synthase family. Homotetramer. Requires FMNH2 as cofactor.

The enzyme catalyses 5-O-(1-carboxyvinyl)-3-phosphoshikimate = chorismate + phosphate. It functions in the pathway metabolic intermediate biosynthesis; chorismate biosynthesis; chorismate from D-erythrose 4-phosphate and phosphoenolpyruvate: step 7/7. Its function is as follows. Catalyzes the anti-1,4-elimination of the C-3 phosphate and the C-6 proR hydrogen from 5-enolpyruvylshikimate-3-phosphate (EPSP) to yield chorismate, which is the branch point compound that serves as the starting substrate for the three terminal pathways of aromatic amino acid biosynthesis. This reaction introduces a second double bond into the aromatic ring system. This chain is Chorismate synthase, found in Opitutus terrae (strain DSM 11246 / JCM 15787 / PB90-1).